The following is a 154-amino-acid chain: Large ribosomal subunit protein bL9c (154 aa).

The protein belongs to the bacterial ribosomal protein bL9 family.

The protein resides in the plastid. The protein localises to the chloroplast. In terms of biological role, binds to the 23S rRNA. The protein is Large ribosomal subunit protein bL9c of Gracilaria tenuistipitata var. liui (Red alga).